A 137-amino-acid polypeptide reads, in one-letter code: Large ribosomal subunit protein uL16 (137 aa).

The interval 1–20 (MLQPSNRKYRKDFKGRNRGV) is disordered. The segment covering 7–17 (RKYRKDFKGRN) has biased composition (basic residues).

Belongs to the universal ribosomal protein uL16 family. In terms of assembly, part of the 50S ribosomal subunit.

Its function is as follows. Binds 23S rRNA and is also seen to make contacts with the A and possibly P site tRNAs. In Coxiella burnetii (strain CbuK_Q154) (Coxiella burnetii (strain Q154)), this protein is Large ribosomal subunit protein uL16.